The chain runs to 404 residues: Cysteine desulfurase IscS (404 aa).

Residues 75–76 (AT), N155, Q183, and 203–205 (SAH) each bind pyridoxal 5'-phosphate. Residue K206 is modified to N6-(pyridoxal phosphate)lysine. T243 contributes to the pyridoxal 5'-phosphate binding site. C328 serves as the catalytic Cysteine persulfide intermediate. Residue C328 participates in [2Fe-2S] cluster binding.

Belongs to the class-V pyridoxal-phosphate-dependent aminotransferase family. NifS/IscS subfamily. As to quaternary structure, homodimer. Forms a heterotetramer with IscU, interacts with other sulfur acceptors. Requires pyridoxal 5'-phosphate as cofactor.

The protein resides in the cytoplasm. The enzyme catalyses (sulfur carrier)-H + L-cysteine = (sulfur carrier)-SH + L-alanine. The protein operates within cofactor biosynthesis; iron-sulfur cluster biosynthesis. Functionally, master enzyme that delivers sulfur to a number of partners involved in Fe-S cluster assembly, tRNA modification or cofactor biosynthesis. Catalyzes the removal of elemental sulfur atoms from cysteine to produce alanine. Functions as a sulfur delivery protein for Fe-S cluster synthesis onto IscU, an Fe-S scaffold assembly protein, as well as other S acceptor proteins. This chain is Cysteine desulfurase IscS, found in Neisseria meningitidis serogroup A / serotype 4A (strain DSM 15465 / Z2491).